The primary structure comprises 88 residues: Small ribosomal subunit protein uS15 (88 aa).

It belongs to the universal ribosomal protein uS15 family. As to quaternary structure, part of the 30S ribosomal subunit. Forms a bridge to the 50S subunit in the 70S ribosome, contacting the 23S rRNA.

Functionally, one of the primary rRNA binding proteins, it binds directly to 16S rRNA where it helps nucleate assembly of the platform of the 30S subunit by binding and bridging several RNA helices of the 16S rRNA. In terms of biological role, forms an intersubunit bridge (bridge B4) with the 23S rRNA of the 50S subunit in the ribosome. The sequence is that of Small ribosomal subunit protein uS15 from Hydrogenovibrio crunogenus (strain DSM 25203 / XCL-2) (Thiomicrospira crunogena).